A 616-amino-acid polypeptide reads, in one-letter code: Angiotensin-converting enzyme (616 aa).

The signal sequence occupies residues 1–23; that stretch reads MNLINFSYLNLLFGAGLFSVLES. The 584-residue stretch at 27 to 610 folds into the Peptidase M2 domain; that stretch reads LNTESDAKKW…PRAENWMGGK (584 aa). 2 N-linked (GlcNAc...) asparagine glycosylation sites follow: asparagine 61 and asparagine 96. Cysteine 142 and cysteine 152 are disulfide-bonded. 2 residues coordinate chloride: arginine 180 and tyrosine 218. Asparagine 303 is a glycosylation site (N-linked (GlcNAc...) asparagine). A disulfide bond links cysteine 345 and cysteine 363. Histidine 376 contributes to the Zn(2+) binding site. Glutamate 377 functions as the Proton acceptor in the catalytic mechanism. Residues histidine 380 and glutamate 404 each contribute to the Zn(2+) site. A glycan (N-linked (GlcNAc...) asparagine) is linked at asparagine 428. Positions 478 and 482 each coordinate chloride. The active-site Proton donor is histidine 506. A chloride-binding site is contributed by arginine 515. Cysteine 531 and cysteine 543 are joined by a disulfide. Residues asparagine 535 and asparagine 573 are each glycosylated (N-linked (GlcNAc...) asparagine).

Belongs to the peptidase M2 family. Zn(2+) is required as a cofactor. It depends on chloride as a cofactor. As to expression, epithelial cells of the midgut.

The protein resides in the secreted. It is found in the extracellular space. The enzyme catalyses Release of a C-terminal dipeptide, oligopeptide-|-Xaa-Yaa, when Xaa is not Pro, and Yaa is neither Asp nor Glu. Thus, conversion of angiotensin I to angiotensin II, with increase in vasoconstrictor activity, but no action on angiotensin II.. Activated by chloride. Inhibited by captopril and lisinopril, and to a lesser extent by delaprilat. This is Angiotensin-converting enzyme (ACE) from Theromyzon tessulatum (Duck leech).